The primary structure comprises 157 residues: Crossover junction endodeoxyribonuclease RuvC (157 aa).

Catalysis depends on residues Asp-9, Glu-70, and Asp-142. Mg(2+) is bound by residues Asp-9, Glu-70, and Asp-142.

The protein belongs to the RuvC family. In terms of assembly, homodimer which binds Holliday junction (HJ) DNA. The HJ becomes 2-fold symmetrical on binding to RuvC with unstacked arms; it has a different conformation from HJ DNA in complex with RuvA. In the full resolvosome a probable DNA-RuvA(4)-RuvB(12)-RuvC(2) complex forms which resolves the HJ. It depends on Mg(2+) as a cofactor.

The protein localises to the cytoplasm. The catalysed reaction is Endonucleolytic cleavage at a junction such as a reciprocal single-stranded crossover between two homologous DNA duplexes (Holliday junction).. The RuvA-RuvB-RuvC complex processes Holliday junction (HJ) DNA during genetic recombination and DNA repair. Endonuclease that resolves HJ intermediates. Cleaves cruciform DNA by making single-stranded nicks across the HJ at symmetrical positions within the homologous arms, yielding a 5'-phosphate and a 3'-hydroxyl group; requires a central core of homology in the junction. The consensus cleavage sequence is 5'-(A/T)TT(C/G)-3'. Cleavage occurs on the 3'-side of the TT dinucleotide at the point of strand exchange. HJ branch migration catalyzed by RuvA-RuvB allows RuvC to scan DNA until it finds its consensus sequence, where it cleaves and resolves the cruciform DNA. The sequence is that of Crossover junction endodeoxyribonuclease RuvC from Cyanothece sp. (strain PCC 7425 / ATCC 29141).